The chain runs to 160 residues: 2-C-methyl-D-erythritol 2,4-cyclodiphosphate synthase (160 aa).

Aspartate 9 and histidine 11 together coordinate a divalent metal cation. Residues 9–11 (DVH) and 35–36 (HS) contribute to the 4-CDP-2-C-methyl-D-erythritol 2-phosphate site. Histidine 43 contacts a divalent metal cation. Residues 57-59 (DIG), 62-66 (FPDTD), 101-107 (AEAPKMA), 133-136 (TTSE), phenylalanine 140, and arginine 143 each bind 4-CDP-2-C-methyl-D-erythritol 2-phosphate.

Belongs to the IspF family. In terms of assembly, homotrimer. The cofactor is a divalent metal cation.

The enzyme catalyses 4-CDP-2-C-methyl-D-erythritol 2-phosphate = 2-C-methyl-D-erythritol 2,4-cyclic diphosphate + CMP. The protein operates within isoprenoid biosynthesis; isopentenyl diphosphate biosynthesis via DXP pathway; isopentenyl diphosphate from 1-deoxy-D-xylulose 5-phosphate: step 4/6. Involved in the biosynthesis of isopentenyl diphosphate (IPP) and dimethylallyl diphosphate (DMAPP), two major building blocks of isoprenoid compounds. Catalyzes the conversion of 4-diphosphocytidyl-2-C-methyl-D-erythritol 2-phosphate (CDP-ME2P) to 2-C-methyl-D-erythritol 2,4-cyclodiphosphate (ME-CPP) with a corresponding release of cytidine 5-monophosphate (CMP). The polypeptide is 2-C-methyl-D-erythritol 2,4-cyclodiphosphate synthase (Methylobacillus flagellatus (strain ATCC 51484 / DSM 6875 / VKM B-1610 / KT)).